The following is a 189-amino-acid chain: Ribosome maturation factor RimP (189 aa).

The protein belongs to the RimP family.

The protein resides in the cytoplasm. Its function is as follows. Required for maturation of 30S ribosomal subunits. The chain is Ribosome maturation factor RimP from Corynebacterium kroppenstedtii (strain DSM 44385 / JCM 11950 / CIP 105744 / CCUG 35717).